A 325-amino-acid polypeptide reads, in one-letter code: Chain length determinant protein (325 aa).

The Cytoplasmic portion of the chain corresponds to 1-31 (MRVENNNVSGQNHDPEQIDLIDLLVQLWRGK). The helical transmembrane segment at 32–52 (MTIIISVIVAIALAIGYLAVA) threads the bilayer. The Periplasmic segment spans residues 53–294 (KEKWTSTAII…LPIRRDSPKK (242 aa)). A helical membrane pass occupies residues 295–315 (AITLILAVLLGGMVGAGIVLG). Over 316-325 (RNALRNYNAK) the chain is Cytoplasmic.

Belongs to the WzzB/Cld/Rol family.

The protein localises to the cell inner membrane. It participates in bacterial outer membrane biogenesis; lipopolysaccharide biosynthesis. In terms of biological role, confers a modal distribution of chain length on the O-antigen component of lipopolysaccharide (LPS). Gives rise to a reduced number of short chain molecules and increases in numbers of longer molecules. This chain is Chain length determinant protein (wzzB), found in Shigella flexneri.